A 666-amino-acid polypeptide reads, in one-letter code: Probable potassium transport system protein Kup (666 aa).

12 helical membrane passes run 16–36 (GFII…LYTM), 58–78 (ISLI…LIAL), 100–120 (PWLI…GALT), 149–169 (IITT…GTGF), 173–193 (IFGP…FFNM), 221–241 (IFIL…YSDL), 253–273 (WPFV…WILA), 294–314 (VYLV…LISG), 343–363 (LYIP…VLAF), 373–393 (YGLA…YYLI), 399–419 (PILA…FFLA), and 424–444 (FMHG…VMFI).

Belongs to the HAK/KUP transporter (TC 2.A.72) family.

The protein localises to the cell membrane. It carries out the reaction K(+)(in) + H(+)(in) = K(+)(out) + H(+)(out). Its function is as follows. Transport of potassium into the cell. Likely operates as a K(+):H(+) symporter. The polypeptide is Probable potassium transport system protein Kup (Streptococcus pyogenes serotype M3 (strain ATCC BAA-595 / MGAS315)).